The sequence spans 272 residues: 5'-AMP-activated protein kinase subunit beta-2 (272 aa).

The interval 1 to 52 (MGNTTSDRVSGERHGAKAARSEGAGGHAPGKEHKIMVGSTDDPSVFSLPDSK) is disordered. At S39 the chain carries Phosphoserine. T40 bears the Phosphothreonine mark. At S69 the chain carries Phosphoserine; by ULK1. Residues S95 and S108 each carry the phosphoserine modification. Phosphothreonine is present on T148. S158, S170, S174, and S184 each carry phosphoserine.

The protein belongs to the 5'-AMP-activated protein kinase beta subunit family. As to quaternary structure, AMPK is a heterotrimer of an alpha catalytic subunit (PRKAA1 or PRKAA2), a beta (PRKAB1 or PRKAB2) and a gamma non-catalytic subunits (PRKAG1, PRKAG2 or PRKAG3). Phosphorylated when associated with the catalytic subunit (PRKAA1 or PRKAA2). Phosphorylated by ULK1 and ULK2; leading to negatively regulate AMPK activity and suggesting the existence of a regulatory feedback loop between ULK1, ULK2 and AMPK.

Functionally, non-catalytic subunit of AMP-activated protein kinase (AMPK), an energy sensor protein kinase that plays a key role in regulating cellular energy metabolism. In response to reduction of intracellular ATP levels, AMPK activates energy-producing pathways and inhibits energy-consuming processes: inhibits protein, carbohydrate and lipid biosynthesis, as well as cell growth and proliferation. AMPK acts via direct phosphorylation of metabolic enzymes, and by longer-term effects via phosphorylation of transcription regulators. Also acts as a regulator of cellular polarity by remodeling the actin cytoskeleton; probably by indirectly activating myosin. Beta non-catalytic subunit acts as a scaffold on which the AMPK complex assembles, via its C-terminus that bridges alpha (PRKAA1 or PRKAA2) and gamma subunits (PRKAG1, PRKAG2 or PRKAG3). The polypeptide is 5'-AMP-activated protein kinase subunit beta-2 (PRKAB2) (Homo sapiens (Human)).